We begin with the raw amino-acid sequence, 263 residues long: (2Z,6E)-farnesyl diphosphate synthase (263 aa).

Asp-40 is an active-site residue. Asp-40 serves as a coordination point for Mg(2+). Residues 41-44, Trp-45, and 86-88 each bind substrate; these read GNRR and STE. Asn-89 acts as the Proton acceptor in catalysis. Substrate contacts are provided by residues Arg-92, Arg-212, and 218 to 220; that span reads RLS. Glu-231 serves as a coordination point for Mg(2+).

This sequence belongs to the UPP synthase family. Z-FPP synthase subfamily. As to quaternary structure, homodimer. Mg(2+) serves as cofactor.

Its subcellular location is the cell membrane. The enzyme catalyses isopentenyl diphosphate + (2E)-geranyl diphosphate = (2Z,6E)-farnesyl diphosphate + diphosphate. Functionally, catalyzes the condensation of only one isopentenyl pyrophosphate (IPP) unit in the cis configuration to E-geranyl diphosphate (E-GPP) generating the 15 carbon product (2Z,6E)-farnesyl diphosphate (Z-FPP or EZ-FPP). Z-FPP is the precursor of decaprenyl diphosphate, which has a central role in the biosynthesis of the mycobacterial cell wall. This chain is (2Z,6E)-farnesyl diphosphate synthase (uppS), found in Mycolicibacterium smegmatis (strain ATCC 700084 / mc(2)155) (Mycobacterium smegmatis).